The sequence spans 538 residues: Putative cysteine ligase BshC (538 aa).

Residues 460–484 are a coiled coil; the sequence is KINEQIELLERMLKRNVEKKHEVEL.

It belongs to the BshC family.

Involved in bacillithiol (BSH) biosynthesis. May catalyze the last step of the pathway, the addition of cysteine to glucosamine malate (GlcN-Mal) to generate BSH. This is Putative cysteine ligase BshC from Bacillus cereus (strain AH187).